Here is a 29-residue protein sequence, read N- to C-terminus: Probable small toxic protein BsrH (29 aa).

Residues 6-26 (FQALMLMLAFGSFIIALLTYI) traverse the membrane as a helical segment.

It is found in the cell membrane. Its function is as follows. Possible toxic component of a type I toxin-antitoxin (TA) system; an overlapping antisense RNA has been identified. The polypeptide is Probable small toxic protein BsrH (Bacillus subtilis (strain 168)).